Here is a 357-residue protein sequence, read N- to C-terminus: Phosphoribosylformylglycinamidine cyclo-ligase (357 aa).

The protein belongs to the AIR synthase family.

The protein resides in the cytoplasm. The catalysed reaction is 2-formamido-N(1)-(5-O-phospho-beta-D-ribosyl)acetamidine + ATP = 5-amino-1-(5-phospho-beta-D-ribosyl)imidazole + ADP + phosphate + H(+). The protein operates within purine metabolism; IMP biosynthesis via de novo pathway; 5-amino-1-(5-phospho-D-ribosyl)imidazole from N(2)-formyl-N(1)-(5-phospho-D-ribosyl)glycinamide: step 2/2. The sequence is that of Phosphoribosylformylglycinamidine cyclo-ligase from Agrobacterium fabrum (strain C58 / ATCC 33970) (Agrobacterium tumefaciens (strain C58)).